The sequence spans 165 residues: Hydroxyproline-rich systemin A (165 aa).

A signal peptide spans 1–18; it reads MRVLFLIYLILSPFGAEA. Positions 19-35 are excised as a propeptide; sequence RTLLENHEGLNVGSGYG. Disordered stretches follow at residues 33–70 and 142–165; these read GYGR…TSEN and YWNR…LHSY. 5 positions are modified to 4-hydroxyproline: proline 42, proline 43, proline 45, proline 49, and proline 50. Residues proline 42, proline 43, proline 45, proline 49, and proline 50 are each glycosylated (O-linked (Ara...) hydroxyproline). The propeptide occupies 54-143; that stretch reads VSNSVSPTRT…FDSKSDERYW (90 aa). 3 positions are modified to 4-hydroxyproline: proline 150, proline 151, and proline 153. Residues proline 150, proline 151, and proline 153 are each glycosylated (O-linked (Ara...) hydroxyproline). Positions 162-165 are excised as a propeptide; the sequence is LHSY.

Post-translationally, O-glycosylated; contains pentose side chains. In terms of tissue distribution, expressed in leaves.

It is found in the secreted. Its function is as follows. Activates a lipid-based signal transduction pathway in which linolenic acid is converted to jasmonic acid, a potent activator of defense gene transcription, including proteinase inhibitors. This Nicotiana tabacum (Common tobacco) protein is Hydroxyproline-rich systemin A.